The sequence spans 266 residues: tRNA (guanine-N(1)-)-methyltransferase (266 aa).

S-adenosyl-L-methionine-binding positions include G113 and 137–142; that span reads LGDYVL.

The protein belongs to the RNA methyltransferase TrmD family. In terms of assembly, homodimer.

Its subcellular location is the cytoplasm. The enzyme catalyses guanosine(37) in tRNA + S-adenosyl-L-methionine = N(1)-methylguanosine(37) in tRNA + S-adenosyl-L-homocysteine + H(+). Functionally, specifically methylates guanosine-37 in various tRNAs. The chain is tRNA (guanine-N(1)-)-methyltransferase from Paenarthrobacter aurescens (strain TC1).